The chain runs to 311 residues: MKKKSLLPLGLAIGLASLAASPLIQASTYTQTKYPIVLAHGMLGFDNILGVDYWFGIPSALRRDGAQVYVTEVSQLDTSEVRGEQLLQQVEEIVALSGQPKVNLIGHSHGGPTIRYVAAVRPDLIASATSVGAPHKGSDTADFLRQIPPGSAGEAVLSGLVNSLGALISFLSSGSTGTQNSLGSLESLNSEGAARFNAKYPQGIPTSACGEGAYKVNGVSYYSWSGSSPLTNFLDPSDAFLGASSLTFKNGTANDGLVGTCSSHLGMVIRDNYRMNHLDEVNQVFGLTSLFETSPVSVYRQHANRLKNASL.

Residues 1–26 (MKKKSLLPLGLAIGLASLAASPLIQA) form the signal peptide. Positions 35 to 280 (PIVLAHGMLG…DNYRMNHLDE (246 aa)) constitute an AB hydrolase-1 domain. Met-42 contributes to the substrate binding site. Ser-108 serves as the catalytic Nucleophile. His-109 is a substrate binding site. Cys-209 and Cys-261 are disulfide-bonded. Residue Asp-235 participates in Ca(2+) binding. Active-site charge relay system residues include Asp-255 and His-277. Ca(2+)-binding residues include Asp-279, Gln-283, and Leu-287.

Belongs to the AB hydrolase superfamily. Pseudomonas lipase family. In terms of assembly, monomer. Ca(2+) is required as a cofactor.

The protein resides in the secreted. The enzyme catalyses a triacylglycerol + H2O = a diacylglycerol + a fatty acid + H(+). Its activity is regulated as follows. Na(+) increases lipase activity. Inhibited by diethyl p-nitrophenyl phosphate and 3,4-dichloroisocoumarin (DCI). In terms of biological role, catalyzes the hydrolysis of triacylglycerol. It also exhibits some esterase activity with p-nitrophenyl acetate and Tween 80 as substrates, however the lipase activity is approximately eight times the esterase activity. It shows a marked specificity for the 1,3-oleyl residues of triolein. The sequence is that of Triacylglycerol lipase from Pseudomonas aeruginosa (strain ATCC 15692 / DSM 22644 / CIP 104116 / JCM 14847 / LMG 12228 / 1C / PRS 101 / PAO1).